Consider the following 426-residue polypeptide: Serine--tRNA ligase (426 aa).

Thr231 to Glu233 provides a ligand contact to L-serine. Arg262–Glu264 contributes to the ATP binding site. Glu285 contacts L-serine. ATP is bound at residue Glu349–Ser352. Ser385 lines the L-serine pocket.

It belongs to the class-II aminoacyl-tRNA synthetase family. Type-1 seryl-tRNA synthetase subfamily. As to quaternary structure, homodimer. The tRNA molecule binds across the dimer.

The protein resides in the cytoplasm. The catalysed reaction is tRNA(Ser) + L-serine + ATP = L-seryl-tRNA(Ser) + AMP + diphosphate + H(+). The enzyme catalyses tRNA(Sec) + L-serine + ATP = L-seryl-tRNA(Sec) + AMP + diphosphate + H(+). Its pathway is aminoacyl-tRNA biosynthesis; selenocysteinyl-tRNA(Sec) biosynthesis; L-seryl-tRNA(Sec) from L-serine and tRNA(Sec): step 1/1. Its function is as follows. Catalyzes the attachment of serine to tRNA(Ser). Is also able to aminoacylate tRNA(Sec) with serine, to form the misacylated tRNA L-seryl-tRNA(Sec), which will be further converted into selenocysteinyl-tRNA(Sec). The polypeptide is Serine--tRNA ligase (Lysinibacillus sphaericus (strain C3-41)).